The following is a 191-amino-acid chain: Peptidyl-tRNA hydrolase (191 aa).

Tyr-16 serves as a coordination point for tRNA. Catalysis depends on His-21, which acts as the Proton acceptor. TRNA is bound by residues Tyr-67, Asn-69, and Asn-115.

It belongs to the PTH family. In terms of assembly, monomer.

It is found in the cytoplasm. The catalysed reaction is an N-acyl-L-alpha-aminoacyl-tRNA + H2O = an N-acyl-L-amino acid + a tRNA + H(+). Functionally, hydrolyzes ribosome-free peptidyl-tRNAs (with 1 or more amino acids incorporated), which drop off the ribosome during protein synthesis, or as a result of ribosome stalling. Catalyzes the release of premature peptidyl moieties from peptidyl-tRNA molecules trapped in stalled 50S ribosomal subunits, and thus maintains levels of free tRNAs and 50S ribosomes. In Wigglesworthia glossinidia brevipalpis, this protein is Peptidyl-tRNA hydrolase.